A 239-amino-acid chain; its full sequence is MNTKKEKIMLFKVYRWNPDKKEKPHISTYSVDLNSCGPMVLDALIKIKNEQDSTLTFRRSCREGVCGSCAMNIDGTNTLACIKSIDTNKKEMKIYPLPHMHIIKDLVPDLSNFYAQYKSIEPWMKTTEKKLDKEFYQSRNDREKLDGLYECVLCACCSTSCPSYWWNSDKYLGPAVLLQAYRWIVDSRDQGTRERLQYLEDPFKLYRCHTILNCTKTCPKHLNPAQAIAKIKQNITLLT.

Positions 11-100 (FKVYRWNPDK…EMKIYPLPHM (90 aa)) constitute a 2Fe-2S ferredoxin-type domain. [2Fe-2S] cluster is bound by residues C61, C66, C69, and C81. The region spanning 141–171 (DREKLDGLYECVLCACCSTSCPSYWWNSDKY) is the 4Fe-4S ferredoxin-type domain. Positions 151, 154, and 157 each coordinate [4Fe-4S] cluster. [3Fe-4S] cluster is bound at residue C161. W166 provides a ligand contact to a ubiquinone. The [3Fe-4S] cluster site is built by C208 and C214. [4Fe-4S] cluster is bound at residue C218.

The protein belongs to the succinate dehydrogenase/fumarate reductase iron-sulfur protein family. Component of complex II composed of four subunits: a flavoprotein (FP), an iron-sulfur protein (IP), and a cytochrome b composed of a large and a small subunit. The cofactor is [2Fe-2S] cluster. [3Fe-4S] cluster is required as a cofactor. [4Fe-4S] cluster serves as cofactor.

The protein resides in the mitochondrion inner membrane. It carries out the reaction a quinone + succinate = fumarate + a quinol. The protein operates within carbohydrate metabolism; tricarboxylic acid cycle; fumarate from succinate (eukaryal route): step 1/1. In terms of biological role, iron-sulfur protein (IP) subunit of succinate dehydrogenase (SDH) that is involved in complex II of the mitochondrial electron transport chain and is responsible for transferring electrons from succinate to ubiquinone (coenzyme Q). The sequence is that of Succinate dehydrogenase [ubiquinone] iron-sulfur subunit (SDH2) from Reclinomonas americana.